The sequence spans 248 residues: UPF0246 protein RPR_00055 (248 aa).

Belongs to the UPF0246 family.

The chain is UPF0246 protein RPR_00055 from Rickettsia peacockii (strain Rustic).